The primary structure comprises 556 residues: MSYQVLASSQNDKVSKIVRPTTTYQPSIWGERFLQYSISDQDFSYKKQRVDELKEVVRREVFLECYDNVSYVLKIVDDVQRLGLSYHFENEIEKALQHIYDNTIHQNHKDEDLHDTSTRFRLLRQHGFMVSSNIFKIFKDEQGNFKECLITDIPGLLSLYEASHLSYIGENILDEALAFTTTHLHQFVKNEKTHPLSNEVLLALQRPIRKSLERLHARHYISSYENKICHNKTLLELAKLDFNLLQCLHRKELSQISRWWKEIDFVHKLPFARDRIVELYLWLLGVFHEPELSLARIISTKVIALASVADDIYDAYGTFEELELLTESINRWDLNCADQLRPECLQTFYKVLLNCYEEFESELGKEESYKVYYAREAMKRLLGAYFSEARWLHEGYFPSFDEHLKVSLISCGYTMMIVTSLIGMKDCVTKQDFEWLSKDPKIMRDCNILCRFMDDIVSHKFEQQRDHSPSTVESYMRQYGVSEQEACDELRKQVINSWKEINKAFLRPSNVPYPVLSLVLNFSRVMDLLYKDGDGYTHIGKETKNSVVALLIDQIP.

(2E,6E)-farnesyl diphosphate contacts are provided by arginine 273, aspartate 310, aspartate 314, arginine 451, and aspartate 454. The Mg(2+) site is built by aspartate 310 and aspartate 314. Residues 310-314 (DDIYD) carry the DDXXD motif motif. 3 residues coordinate Mg(2+): aspartate 454, serine 458, and glutamate 462.

It belongs to the terpene synthase family. Tpsb subfamily. It depends on Mg(2+) as a cofactor. Mn(2+) is required as a cofactor. In terms of tissue distribution, expressed in glandular trichomes two to four weeks after flowering onset.

It carries out the reaction (2E,6E)-farnesyl diphosphate = (-)-(E)-beta-caryophyllene + diphosphate. The enzyme catalyses (2E,6E)-farnesyl diphosphate = alpha-humulene + diphosphate. The protein operates within secondary metabolite biosynthesis; terpenoid biosynthesis. In terms of biological role, involved in sesquiterpene olefins biosynthesis, constituants of cannabinoids and terpenoids-rich resins. Catalyzes mainly the conversion of (2E)-farnesyl diphosphate to beta-caryophyllene and alpha-humulene. Can also use (2E)-geranyl diphosphate as substrate with low efficiency. The protein is Beta-caryophyllene synthase TPS9FN of Cannabis sativa (Hemp).